Here is a 738-residue protein sequence, read N- to C-terminus: Flowering time control protein FCA (738 aa).

A disordered region spans residues 1–118 (MHRGGDRSTD…RGDHSDHDNR (118 aa)). Gly residues-rich tracts occupy residues 52–70 (RGGGGGGGDGGGGGGGGGR) and 81–98 (SGGGGYRSGGGGEYGEPG). The segment covering 109–118 (RGDHSDHDNR) has biased composition (basic and acidic residues). RRM domains are found at residues 122 to 203 (VKLF…YADG) and 213 to 293 (HKLF…FADP). 2 disordered regions span residues 292-451 (DPKR…PAQQ) and 566-595 (QQSNLNHQQPTQGQPVQSSNPGAPNAIIPS). Over residues 301-311 (SRGGPAFGGPG) the composition is skewed to gly residues. Positions 342–358 (HPSSPRSAPHQFNNFGS) are enriched in polar residues. The span at 368–377 (TVTSTTDTAT) shows a compositional bias: low complexity. Residues 383-401 (FSGNGSLSSQTAVPSSSHM) are compositionally biased toward polar residues. A compositionally biased stretch (low complexity) spans 435 to 451 (QLQNNQQGQPLQGPAQQ). The segment covering 575–595 (PTQGQPVQSSNPGAPNAIIPS) has biased composition (polar residues). One can recognise a WW domain in the interval 609-642 (VPLTCNWTEHTSPEGFKYYYNSITRESKWDKPEE). A disordered region spans residues 670–738 (MQQLQSPPQA…QSAQERAWKS (69 aa)). A compositionally biased stretch (low complexity) spans 683–706 (PAMQPVQQIPQAQQGQQQMQMKQQ). A compositionally biased stretch (polar residues) spans 723–732 (RIQQGIQSAQ).

As to quaternary structure, interacts with FY. Binds to SF1, FIK, RPRD1B, OsI_31983 and MADS8.

The protein localises to the nucleus. In terms of biological role, plays a major role in the promotion of the transition of the vegetative meristem to reproductive development. Required for RNA-mediated chromatin silencing of a range of loci in the genome. Cotranscriptionally recognizes aberrant RNA and marks it for silencing. Controls alternative cleavage and polyadenylation on pre-mRNAs and antisense RNAs. Regulates flowering time, seed size and cell volume, probably via the modulation of cell size. The sequence is that of Flowering time control protein FCA from Oryza sativa subsp. indica (Rice).